Reading from the N-terminus, the 123-residue chain is Large ribosomal subunit protein uL14 (123 aa).

It belongs to the universal ribosomal protein uL14 family. Part of the 50S ribosomal subunit. Forms a cluster with proteins L3 and L19. In the 70S ribosome, L14 and L19 interact and together make contacts with the 16S rRNA in bridges B5 and B8.

In terms of biological role, binds to 23S rRNA. Forms part of two intersubunit bridges in the 70S ribosome. This chain is Large ribosomal subunit protein uL14, found in Yersinia pestis bv. Antiqua (strain Antiqua).